We begin with the raw amino-acid sequence, 446 residues long: Chromosomal replication initiator protein DnaA (446 aa).

The interval 1–81 (MENISDLWNS…AKLAIRFIIP (81 aa)) is domain I, interacts with DnaA modulators. Residues 81-109 (PQSQAEEDIDLPPVKRNPAQDDSAHLPQS) form a domain II region. The domain III, AAA+ region stretch occupies residues 110–326 (MLNPKYTFDT…GALIRVVAYS (217 aa)). ATP is bound by residues glycine 154, glycine 156, lysine 157, and threonine 158. Residues 327–446 (SLINKDINAD…QVEEINGILK (120 aa)) are domain IV, binds dsDNA.

The protein belongs to the DnaA family. Oligomerizes as a right-handed, spiral filament on DNA at oriC.

The protein localises to the cytoplasm. Functionally, plays an essential role in the initiation and regulation of chromosomal replication. ATP-DnaA binds to the origin of replication (oriC) to initiate formation of the DNA replication initiation complex once per cell cycle. Binds the DnaA box (a 9 base pair repeat at the origin) and separates the double-stranded (ds)DNA. Forms a right-handed helical filament on oriC DNA; dsDNA binds to the exterior of the filament while single-stranded (ss)DNA is stabiized in the filament's interior. The ATP-DnaA-oriC complex binds and stabilizes one strand of the AT-rich DNA unwinding element (DUE), permitting loading of DNA polymerase. After initiation quickly degrades to an ADP-DnaA complex that is not apt for DNA replication. Binds acidic phospholipids. In Bacillus cereus (strain G9842), this protein is Chromosomal replication initiator protein DnaA.